The sequence spans 276 residues: MQHPAEHSPLGKTSEYVSSYTPSLLFPISRTAKWAELGLSAETLPYRGVDIWNCYELSWLTPAGKPVVAIGEFSIPADSPNIIESKSFKLYLNSLNQSAFDSREALRAVLQKDLSAAVGAPVGVRLRSLDEVAEEGIGRLPGRCIDELDIAVDGYEQPRPELLRCDAGRIVEEQLYSHLLKSNCPVTGQPDWGTLVVDYRGPALDPASLLAYLVSFRQHQDFHEQCVERIFLDLQRLLQPQALSVYARYVRRGGLDINPYRSLAEVAPDNRRLVRQ.

83 to 85 (IES) is a binding site for substrate. NADPH is bound at residue 85–86 (SK). Cys184 functions as the Thioimide intermediate in the catalytic mechanism. The Proton donor role is filled by Asp191. 223 to 224 (HE) is a binding site for substrate. 252–253 (RG) is a binding site for NADPH.

This sequence belongs to the GTP cyclohydrolase I family. QueF type 2 subfamily. As to quaternary structure, homodimer.

It is found in the cytoplasm. The catalysed reaction is 7-aminomethyl-7-carbaguanine + 2 NADP(+) = 7-cyano-7-deazaguanine + 2 NADPH + 3 H(+). It participates in tRNA modification; tRNA-queuosine biosynthesis. Its function is as follows. Catalyzes the NADPH-dependent reduction of 7-cyano-7-deazaguanine (preQ0) to 7-aminomethyl-7-deazaguanine (preQ1). In Pseudomonas aeruginosa (strain ATCC 15692 / DSM 22644 / CIP 104116 / JCM 14847 / LMG 12228 / 1C / PRS 101 / PAO1), this protein is NADPH-dependent 7-cyano-7-deazaguanine reductase.